A 286-amino-acid chain; its full sequence is Beta-lactamase SHV-24 (286 aa).

The signal sequence occupies residues 1 to 21; the sequence is MRYIRLCIISLLATLPLAVHA. Ser66 acts as the Acyl-ester intermediate in catalysis. Cysteines 73 and 119 form a disulfide. The active-site Proton acceptor is the Glu164. 230-232 provides a ligand contact to substrate; that stretch reads KTG.

Belongs to the class-A beta-lactamase family.

It carries out the reaction a beta-lactam + H2O = a substituted beta-amino acid. Hydrolyzes ampicillin. Can also hydrolyze cephaloridine, aztreonam and ceftazidime with a low catalytic rate. The sequence is that of Beta-lactamase SHV-24 (bla) from Escherichia coli.